A 291-amino-acid polypeptide reads, in one-letter code: Protease HtpX (291 aa).

2 helical membrane-spanning segments follow: residues 4-24 (IALFLATNLAVMIVFSIVLNI) and 36-56 (LSGLLVMAVLFGFGGSLVSLL). Residue histidine 143 coordinates Zn(2+). Residue glutamate 144 is part of the active site. Histidine 147 contacts Zn(2+). The next 2 membrane-spanning stretches (helical) occupy residues 151 to 171 (GDMITMTLMQGVVNTFVIFLS) and 199 to 219 (FIVSTVLEIAFGFLASFLTMW). Glutamate 225 provides a ligand contact to Zn(2+).

The protein belongs to the peptidase M48B family. Zn(2+) serves as cofactor.

It is found in the cell inner membrane. In Aliivibrio salmonicida (strain LFI1238) (Vibrio salmonicida (strain LFI1238)), this protein is Protease HtpX.